A 213-amino-acid chain; its full sequence is Peroxynitrite isomerase 2 (213 aa).

Positions 58-64 (GVWRGEG) match the GXWXGXG motif. Heme b contacts are provided by lysine 176 and histidine 203.

The protein belongs to the nitrobindin family. As to quaternary structure, homodimer. It depends on heme b as a cofactor.

It carries out the reaction peroxynitrite = nitrate. The protein operates within nitrogen metabolism. Its function is as follows. Heme-binding protein able to scavenge peroxynitrite and to protect free L-tyrosine against peroxynitrite-mediated nitration, by acting as a peroxynitrite isomerase that converts peroxynitrite to nitrate. Therefore, this protein likely plays a role in peroxynitrite sensing and in the detoxification of reactive nitrogen and oxygen species (RNS and ROS, respectively). Is able to bind nitric oxide (NO) in vitro, but may act as a sensor of peroxynitrite levels in vivo. This is Peroxynitrite isomerase 2 from Rhodococcus jostii (strain RHA1).